The primary structure comprises 1464 residues: Neuropathy target esterase sws (1464 aa).

Residues 1–34 (MDVLELLRASATGCYNTIFSEAWHQYVHKQIAAA) are Lumenal-facing. Residues 35-55 (VYWYGALFLLGVLLFVWFLYF) traverse the membrane as a helical segment. At 56–1464 (KRLARLRLRD…GNTTNNDTKN (1409 aa)) the chain is on the cytoplasmic side. 176–303 (IFGHFEKPIF…IRVIQVIMIR (128 aa)) lines the a nucleoside 3',5'-cyclic phosphate pocket. 2 disordered regions span residues 329–393 (NKNS…LHYH) and 409–438 (QQQQSLNSPRRNSTAHVSEAAAASTASSPT). The span at 338–367 (TGQTTSNVQSQTSQATQSRPSGTTRTPTSP) shows a compositional bias: low complexity. Residues 409 to 420 (QQQQSLNSPRRN) show a composition bias toward polar residues. Ser421 bears the Phosphoserine mark. The segment covering 422-438 (TAHVSEAAAASTASSPT) has biased composition (low complexity). A nucleoside 3',5'-cyclic phosphate contacts are provided by residues 456–586 (ELGL…VVRR) and 575–702 (IVLG…LSHR). The PNPLA domain occupies 928 to 1094 (LVLGGGGARG…VNNLPGHLWR (167 aa)). Residues 932–937 (GGGARG) carry the GXGXXG motif. Positions 959–963 (GVSIG) match the GXSXG motif. Ser961 serves as the catalytic Nucleophile. The active-site Proton acceptor is the Asp1081. A DGA/G motif is present at residues 1081-1083 (DGG). The residue at position 1175 (Ser1175) is a Phosphoserine. Disordered regions lie at residues 1352 to 1374 (VDKATQSTPTLPDKRSVQTPTPS) and 1400 to 1464 (ATNT…DTKN). Over residues 1429-1444 (KRTEQDEHELEHEQVV) the composition is skewed to basic and acidic residues. The segment covering 1450–1464 (MDKQQGNTTNNDTKN) has biased composition (polar residues).

The protein belongs to the NTE family. As to quaternary structure, interacts with Pka-C3; interaction inhibits the catalytic function of Pka-C3 and the esterase activity of sws.

It localises to the endoplasmic reticulum membrane. It catalyses the reaction a 1-acyl-sn-glycero-3-phosphocholine + H2O = sn-glycerol 3-phosphocholine + a fatty acid + H(+). Functionally, phospholipase B that deacylates intracellular phosphatidylcholine (PtdCho), generating glycerophosphocholine (GroPtdCho). This deacylation occurs at both sn-2 and sn-1 positions of PtdCho. Its specific chemical modification by certain organophosphorus (OP) compounds leads to distal axonopathy. Plays a role in the signaling mechanism between neurons and glia that regulates glia wrapping during development of the adult brain. Essential for membrane lipid homeostasis and cell survival in both neurons and glia of the adult brain. This Drosophila grimshawi (Hawaiian fruit fly) protein is Neuropathy target esterase sws.